The chain runs to 704 residues: Polyribonucleotide nucleotidyltransferase (704 aa).

Mg(2+)-binding residues include aspartate 488 and aspartate 494. Residues 555-614 (PRITTIKINPEKIRDVIGKGGATIRALTEETGTTIELDDDGTVKIASSNGEATKEAIRRI) enclose the KH domain. In terms of domain architecture, S1 motif spans 624-692 (GTVYNGKVVR…RQGRVRLSMK (69 aa)).

This sequence belongs to the polyribonucleotide nucleotidyltransferase family. Component of the RNA degradosome, which is a multiprotein complex involved in RNA processing and mRNA degradation. Requires Mg(2+) as cofactor.

The protein localises to the cytoplasm. It carries out the reaction RNA(n+1) + phosphate = RNA(n) + a ribonucleoside 5'-diphosphate. Its function is as follows. Involved in mRNA degradation. Catalyzes the phosphorolysis of single-stranded polyribonucleotides processively in the 3'- to 5'-direction. This Shewanella halifaxensis (strain HAW-EB4) protein is Polyribonucleotide nucleotidyltransferase.